Here is a 272-residue protein sequence, read N- to C-terminus: Secretagogin (272 aa).

EF-hand domains are found at residues 8–43 (LDAA…MLKK), 53–89 (ERVQ…QEEN), 101–136 (DNSV…LFLQ), 145–180 (KLDE…QENF), 193–228 (ERKR…MMEL), and 237–272 (DLDK…KHKP). 5 residues coordinate Ca(2+): aspartate 21, aspartate 23, asparagine 25, tyrosine 27, and glutamate 32. Aspartate 114, aspartate 116, serine 118, tyrosine 120, glutamate 125, aspartate 158, asparagine 160, aspartate 162, arginine 164, aspartate 169, aspartate 206, serine 208, threonine 210, glutamate 217, aspartate 250, asparagine 252, aspartate 254, lysine 256, and glutamate 261 together coordinate Ca(2+).

It localises to the cytoplasm. In Danio rerio (Zebrafish), this protein is Secretagogin (scgn).